The primary structure comprises 570 residues: Putative ABC transporter ATP-binding protein SACOL2708 (570 aa).

ABC transporter domains follow at residues 6-247 (ISFK…GIRE) and 304-537 (LELN…ASLR). Residues 40–47 (GASGSGKS) and 338–345 (GHNGAGKS) each bind ATP.

It belongs to the ABC transporter superfamily.

The protein localises to the cell membrane. Probably part of an ABC transporter complex. Responsible for energy coupling to the transport system. This chain is Putative ABC transporter ATP-binding protein SACOL2708, found in Staphylococcus aureus (strain COL).